The following is an 87-amino-acid chain: DNA-directed RNA polymerase subunit omega (87 aa).

Belongs to the RNA polymerase subunit omega family. In terms of assembly, the RNAP catalytic core consists of 2 alpha, 1 beta, 1 beta' and 1 omega subunit. When a sigma factor is associated with the core the holoenzyme is formed, which can initiate transcription.

The catalysed reaction is RNA(n) + a ribonucleoside 5'-triphosphate = RNA(n+1) + diphosphate. In terms of biological role, promotes RNA polymerase assembly. Latches the N- and C-terminal regions of the beta' subunit thereby facilitating its interaction with the beta and alpha subunits. The polypeptide is DNA-directed RNA polymerase subunit omega (Pseudomonas savastanoi pv. phaseolicola (strain 1448A / Race 6) (Pseudomonas syringae pv. phaseolicola (strain 1448A / Race 6))).